The following is a 233-amino-acid chain: Orotidine 5'-phosphate decarboxylase (233 aa).

Substrate-binding positions include Asp9, Lys31, 58–67 (DLKLHDIPNT), Thr120, Arg182, Gln191, Gly211, and Arg212. The Proton donor role is filled by Lys60.

The protein belongs to the OMP decarboxylase family. Type 1 subfamily. As to quaternary structure, homodimer.

It carries out the reaction orotidine 5'-phosphate + H(+) = UMP + CO2. The protein operates within pyrimidine metabolism; UMP biosynthesis via de novo pathway; UMP from orotate: step 2/2. Functionally, catalyzes the decarboxylation of orotidine 5'-monophosphate (OMP) to uridine 5'-monophosphate (UMP). The chain is Orotidine 5'-phosphate decarboxylase from Listeria monocytogenes serotype 4b (strain CLIP80459).